Reading from the N-terminus, the 255-residue chain is Thiazole synthase (255 aa).

The active-site Schiff-base intermediate with DXP is the K97. Residues G158, 184-185, and 206-207 each bind 1-deoxy-D-xylulose 5-phosphate; these read AG and NT.

Belongs to the ThiG family. As to quaternary structure, homotetramer. Forms heterodimers with either ThiH or ThiS.

It is found in the cytoplasm. It catalyses the reaction [ThiS sulfur-carrier protein]-C-terminal-Gly-aminoethanethioate + 2-iminoacetate + 1-deoxy-D-xylulose 5-phosphate = [ThiS sulfur-carrier protein]-C-terminal Gly-Gly + 2-[(2R,5Z)-2-carboxy-4-methylthiazol-5(2H)-ylidene]ethyl phosphate + 2 H2O + H(+). It participates in cofactor biosynthesis; thiamine diphosphate biosynthesis. In terms of biological role, catalyzes the rearrangement of 1-deoxy-D-xylulose 5-phosphate (DXP) to produce the thiazole phosphate moiety of thiamine. Sulfur is provided by the thiocarboxylate moiety of the carrier protein ThiS. In vitro, sulfur can be provided by H(2)S. This chain is Thiazole synthase, found in Moorella thermoacetica (strain ATCC 39073 / JCM 9320).